Here is a 585-residue protein sequence, read N- to C-terminus: Parathyroid hormone/parathyroid hormone-related peptide receptor (585 aa).

The first 26 residues, 1-26 (MGAARIAPGLALLLCCPVLSSAYALV), serve as a signal peptide directing secretion. The Extracellular segment spans residues 27-184 (DADDVMTKEE…REREVFDRLG (158 aa)). Cystine bridges form between cysteine 48–cysteine 113, cysteine 104–cysteine 144, and cysteine 127–cysteine 166. The disordered stretch occupies residues 66 to 100 (DKGWASAPTSGKPRKEKASGKLYPESGEDTGSRHQ). N-linked (GlcNAc...) asparagine glycosylation is found at asparagine 147, asparagine 157, asparagine 162, and asparagine 172. Residues 185-208 (MIYTVGYSVSLASLTVAVLILAYF) form a helical membrane-spanning segment. Topologically, residues 209-215 (RRLHCTR) are cytoplasmic. Residues 216–235 (NYIHMHLFLSFMLRAVSIFV) traverse the membrane as a helical segment. The Extracellular segment spans residues 236–277 (KDAVLYSGATLDEAERLTEEELRAIAQAPLPPVAATSYVGCR). A helical membrane pass occupies residues 278–301 (VAVTFFLYFLATNYYWILVEGLYL). Topologically, residues 302–315 (HSLIFMAFFSEKKY) are cytoplasmic. The helical transmembrane segment at 316–337 (LWGFTVFGWGLPAIFVAVWVSV) threads the bilayer. Over 338-356 (RATLANTGCWDLSSGNKKW) the chain is Extracellular. Residues 357-377 (IIQVPILASIVLNFILFINIV) traverse the membrane as a helical segment. The Cytoplasmic portion of the chain corresponds to 378–404 (RVLATKLRETNAGRCDTRQQYRKLLKS). A helical transmembrane segment spans residues 405–423 (TLVLMPLFGVHYIVFMATP). Topologically, residues 424 to 435 (YTEVSGTLWQVQ) are extracellular. The helical transmembrane segment at 436-458 (MHYEMLFNSFQGFFVAIIYCFCN) threads the bilayer. Residues 459–585 (GEVQAEIKKS…LLQEEWETVM (127 aa)) are Cytoplasmic-facing. The short motif at 469-472 (WSRW) is the Important for interaction with G proteins element. Threonine 543 bears the Phosphothreonine mark.

It belongs to the G-protein coupled receptor 2 family. Homodimer in the absence of bound ligand. Peptide hormone binding leads to dissociation of the homodimer. Post-translationally, N-glycosylated.

It is found in the cell membrane. In terms of biological role, G-protein-coupled receptor for parathyroid hormone (PTH) and for parathyroid hormone-related peptide (PTHLH). Ligand binding causes a conformation change that triggers signaling via guanine nucleotide-binding proteins (G proteins) and modulates the activity of downstream effectors, such as adenylate cyclase (cAMP). PTH1R is coupled to G(s) G alpha proteins and mediates activation of adenylate cyclase activity. PTHLH dissociates from PTH1R more rapidly than PTH; as consequence, the cAMP response induced by PTHLH decays faster than the response induced by PTH. This chain is Parathyroid hormone/parathyroid hormone-related peptide receptor (PTH1R), found in Sus scrofa (Pig).